The chain runs to 334 residues: Glyceraldehyde-3-phosphate dehydrogenase (334 aa).

NAD(+)-binding positions include 12–13 (TI) and Gly-111. A D-glyceraldehyde 3-phosphate-binding site is contributed by 140 to 142 (SCN). The active-site Nucleophile is Cys-141. Arg-167 is an NAD(+) binding site. 192–193 (HG) provides a ligand contact to D-glyceraldehyde 3-phosphate. NAD(+) is bound at residue Gln-298.

It belongs to the glyceraldehyde-3-phosphate dehydrogenase family. Homotetramer.

It localises to the cytoplasm. It catalyses the reaction D-glyceraldehyde 3-phosphate + phosphate + NADP(+) = (2R)-3-phospho-glyceroyl phosphate + NADPH + H(+). It carries out the reaction D-glyceraldehyde 3-phosphate + phosphate + NAD(+) = (2R)-3-phospho-glyceroyl phosphate + NADH + H(+). Its pathway is carbohydrate degradation; glycolysis; pyruvate from D-glyceraldehyde 3-phosphate: step 1/5. This is Glyceraldehyde-3-phosphate dehydrogenase from Thermococcus onnurineus (strain NA1).